The sequence spans 275 residues: 2,3,4,5-tetrahydropyridine-2,6-dicarboxylate N-succinyltransferase (275 aa).

This sequence belongs to the transferase hexapeptide repeat family.

The protein localises to the cytoplasm. It carries out the reaction (S)-2,3,4,5-tetrahydrodipicolinate + succinyl-CoA + H2O = (S)-2-succinylamino-6-oxoheptanedioate + CoA. It participates in amino-acid biosynthesis; L-lysine biosynthesis via DAP pathway; LL-2,6-diaminopimelate from (S)-tetrahydrodipicolinate (succinylase route): step 1/3. The polypeptide is 2,3,4,5-tetrahydropyridine-2,6-dicarboxylate N-succinyltransferase (Paraburkholderia phymatum (strain DSM 17167 / CIP 108236 / LMG 21445 / STM815) (Burkholderia phymatum)).